A 254-amino-acid polypeptide reads, in one-letter code: Rho-related protein racD (254 aa).

G15 to T22 contacts GTP. The Effector region motif lies at Y37–F45. GTP contacts are provided by residues D62–Q66 and T120–D123. Positions A186–P231 are enriched in low complexity. Residues A186–K254 are disordered. Residues A232–K254 show a composition bias toward basic and acidic residues.

Belongs to the small GTPase superfamily. Rho family.

This Dictyostelium discoideum (Social amoeba) protein is Rho-related protein racD (racD).